Here is a 197-residue protein sequence, read N- to C-terminus: Imidazoleglycerol-phosphate dehydratase (197 aa).

Belongs to the imidazoleglycerol-phosphate dehydratase family.

It localises to the cytoplasm. The enzyme catalyses D-erythro-1-(imidazol-4-yl)glycerol 3-phosphate = 3-(imidazol-4-yl)-2-oxopropyl phosphate + H2O. The protein operates within amino-acid biosynthesis; L-histidine biosynthesis; L-histidine from 5-phospho-alpha-D-ribose 1-diphosphate: step 6/9. This chain is Imidazoleglycerol-phosphate dehydratase, found in Stutzerimonas stutzeri (strain A1501) (Pseudomonas stutzeri).